Here is a 726-residue protein sequence, read N- to C-terminus: Long-chain-alcohol oxidase FAO4A (726 aa).

Residues Ile-103–Phe-119 traverse the membrane as a helical segment. Position 224 to 239 (Cys-224 to Ala-239) interacts with FAD. His-659 functions as the Proton acceptor in the catalytic mechanism.

This sequence belongs to the GMC oxidoreductase family.

Its subcellular location is the membrane. The enzyme catalyses a long-chain primary fatty alcohol + O2 = a long-chain fatty aldehyde + H2O2. Long-chain fatty alcohol oxidase involved in the omega-oxidation pathway of lipid degradation. The sequence is that of Long-chain-alcohol oxidase FAO4A (FAO4A) from Arabidopsis thaliana (Mouse-ear cress).